A 465-amino-acid chain; its full sequence is A-type ATP synthase subunit B (465 aa).

It belongs to the ATPase alpha/beta chains family. In terms of assembly, has multiple subunits with at least A(3), B(3), C, D, E, F, H, I and proteolipid K(x).

It localises to the cell membrane. Its function is as follows. Component of the A-type ATP synthase that produces ATP from ADP in the presence of a proton gradient across the membrane. The B chain is a regulatory subunit. The polypeptide is A-type ATP synthase subunit B (Thermococcus kodakarensis (strain ATCC BAA-918 / JCM 12380 / KOD1) (Pyrococcus kodakaraensis (strain KOD1))).